A 342-amino-acid polypeptide reads, in one-letter code: L-threonine 3-dehydrogenase (342 aa).

Cys38 is a binding site for Zn(2+). Active-site charge relay system residues include Thr40 and His43. His63, Glu64, Cys93, Cys96, Cys99, and Cys107 together coordinate Zn(2+). NAD(+) contacts are provided by residues Ile175, Asp195, Arg200, 262 to 264, and 286 to 287; these read LGI and IY.

This sequence belongs to the zinc-containing alcohol dehydrogenase family. As to quaternary structure, homotetramer. Zn(2+) serves as cofactor.

The protein localises to the cytoplasm. The catalysed reaction is L-threonine + NAD(+) = (2S)-2-amino-3-oxobutanoate + NADH + H(+). Its pathway is amino-acid degradation; L-threonine degradation via oxydo-reductase pathway; glycine from L-threonine: step 1/2. Functionally, catalyzes the NAD(+)-dependent oxidation of L-threonine to 2-amino-3-ketobutyrate. This Paraburkholderia phymatum (strain DSM 17167 / CIP 108236 / LMG 21445 / STM815) (Burkholderia phymatum) protein is L-threonine 3-dehydrogenase.